The chain runs to 406 residues: Cholinephosphotransferase 1 (406 aa).

At alanine 2 the chain carries N-acetylalanine. Over 2–62 (AAGAGAGSAP…LLQWIPLWMA (61 aa)) the chain is Cytoplasmic. A helical membrane pass occupies residues 63–83 (PNSITLLGLAVNVVTTLVLIS). Asparagine 64 serves as a coordination point for CDP-choline. Over 84 to 93 (YCPTATEEAP) the chain is Lumenal. The helical transmembrane segment at 94 to 118 (YWTYLLCALGLFIYQSLDAIDGKQA) threads the bilayer. Positions 111 and 114 each coordinate Mg(2+). Arginine 119 is a binding site for CDP-choline. Topologically, residues 119–125 (RRTNSCS) are cytoplasmic. The chain crosses the membrane as a helical span at residues 126-150 (PLGELFDHGCDSLSTVFMAVGASIA). Residue aspartate 132 participates in Mg(2+) binding. The active-site Proton acceptor is histidine 133. Aspartate 136 provides a ligand contact to Mg(2+). Residues 151-160 (ARLGTYPDWF) lie on the Lumenal side of the membrane. The helical transmembrane segment at 161 to 179 (FFCSFIGMFVFYCAHWQTY) threads the bilayer. Over 180–190 (VSGMLRFGKVD) the chain is Cytoplasmic. Residues 191–207 (VTEIQIALVIVFVLSAF) traverse the membrane as a helical segment. Residues 208 to 222 (GGATMWDYTIPILEI) are Lumenal-facing. Residues 223 to 248 (KLKILPVLGFLGGVIFSCSNYFHVIL) traverse the membrane as a helical segment. Topologically, residues 249–265 (HGGVGKNGSTIAGTSVL) are cytoplasmic. A helical transmembrane segment spans residues 266-281 (SPGLHIGLIIILAIMI). Residues 282 to 293 (YKKSATDVFEKH) are Lumenal-facing. The chain crosses the membrane as a helical span at residues 294-316 (PCLYILMFGCVFAKVSQKLVVAH). Residues 317–329 (MTKSELYLQDTVF) are Cytoplasmic-facing. A helical transmembrane segment spans residues 330 to 339 (LGPGLLFLDQ). Residues 340-346 (YFNNFID) lie on the Lumenal side of the membrane. Residues 347 to 376 (EYVVLWMAMVISSFDMVIYFSALCLQISRH) traverse the membrane as a helical segment. Over 377–406 (LHLNIFKTACHQAPEQVQVLSSKSHQNNMD) the chain is Cytoplasmic.

Belongs to the CDP-alcohol phosphatidyltransferase class-I family. It depends on Mg(2+) as a cofactor. The cofactor is Mn(2+). Highly expressed in testis, colon, small intestine, heart, prostate and spleen. Also detected in kidney, skeletal muscle, pancreas, leukocytes, ovary and thymus. Weakly expressed in the brain, placenta and lung. Overexpressed in cancerous breast epithelial cell lines.

The protein localises to the golgi apparatus membrane. The catalysed reaction is CDP-choline + a 1,2-diacyl-sn-glycerol = a 1,2-diacyl-sn-glycero-3-phosphocholine + CMP + H(+). It carries out the reaction 1-octadecanoyl-2-(5Z,8Z,11Z,14Z-eicosatetraenoyl)-sn-glycerol + CDP-choline = 1-octadecanoyl-2-(5Z,8Z,11Z,14Z-eicosatetraenoyl)-sn-glycero-3-phosphocholine + CMP + H(+). The enzyme catalyses 1-hexadecanoyl-2-(9Z-octadecenoyl)-sn-glycerol + CDP-choline = 1-hexadecanoyl-2-(9Z-octadecenoyl)-sn-glycero-3-phosphocholine + CMP + H(+). It catalyses the reaction 1-hexadecanoyl-2-(4Z,7Z,10Z,13Z,16Z,19Z-docosahexaenoyl)-sn-glycerol + CDP-choline = 1-hexadecanoyl-2-(4Z,7Z,10Z,13Z,16Z,19Z-docosahexaenoyl)-sn-glycero-3-phosphocholine + CMP + H(+). The catalysed reaction is 1,2-dioctanoyl-sn-glycerol + CDP-choline = 1,2-dioctanoyl-sn-glycero-3-phosphocholine + CMP + H(+). It functions in the pathway phospholipid metabolism; phosphatidylcholine biosynthesis; phosphatidylcholine from phosphocholine: step 2/2. Its function is as follows. Catalyzes the final step of de novo phosphatidylcholine (PC) synthesis, i.e. the transfer of choline phosphate from CDP-choline to the free hydroxyl of a diacylglycerol (DAG), producing a PC. It thereby plays a central role in the formation and maintenance of vesicular membranes. This chain is Cholinephosphotransferase 1, found in Homo sapiens (Human).